The chain runs to 464 residues: Rab GDP-dissociation inhibitor (464 aa).

It belongs to the Rab GDI family. Interacts with the GDP-bound form of Rab GTPase YPT7.

Functionally, regulates the GDP/GTP exchange reaction of YPT7 by inhibiting the dissociation of GDP from it, and the subsequent binding of GTP to YTP7. The protein is Rab GDP-dissociation inhibitor (GDI1) of Pyricularia oryzae (strain 70-15 / ATCC MYA-4617 / FGSC 8958) (Rice blast fungus).